The sequence spans 551 residues: HTH-type transcriptional regulator SgrR (551 aa).

Residues M1–R116 enclose the HTH marR-type domain. A DNA-binding region (H-T-H motif) is located at residues L26–D49. Residues E163–W492 form a solute-binding region.

Its function is as follows. Activates the small RNA gene sgrS under glucose-phosphate stress conditions as well as yfdZ. Represses its own transcription under both stress and non-stress conditions. Might act as a sensor of the intracellular accumulation of phosphoglucose by binding these molecules in its C-terminal solute-binding domain. In Escherichia coli O6:K15:H31 (strain 536 / UPEC), this protein is HTH-type transcriptional regulator SgrR.